The primary structure comprises 215 residues: Oligoribonuclease (215 aa).

Residues 5 to 170 (LVWIDCEMTG…ADIHESIREL (166 aa)) form the Exonuclease domain. Residue Y127 is part of the active site. Positions 196 to 215 (LGPPGKDAADTDSAAGHTTG) are disordered.

The protein belongs to the oligoribonuclease family.

Its subcellular location is the cytoplasm. Its function is as follows. 3'-to-5' exoribonuclease specific for small oligoribonucleotides. The sequence is that of Oligoribonuclease from Mycobacterium sp. (strain JLS).